We begin with the raw amino-acid sequence, 297 residues long: D-aminoacyl-tRNA deacylase (297 aa).

Belongs to the DtdA deacylase family. In terms of assembly, monomer. The cofactor is Zn(2+).

It catalyses the reaction a D-aminoacyl-tRNA + H2O = a tRNA + a D-alpha-amino acid + H(+). The enzyme catalyses glycyl-tRNA(Ala) + H2O = tRNA(Ala) + glycine + H(+). Its function is as follows. D-aminoacyl-tRNA deacylase with broad substrate specificity. By recycling D-aminoacyl-tRNA to D-amino acids and free tRNA molecules, this enzyme counteracts the toxicity associated with the formation of D-aminoacyl-tRNA entities in vivo. This is D-aminoacyl-tRNA deacylase from Methanosarcina acetivorans (strain ATCC 35395 / DSM 2834 / JCM 12185 / C2A).